Consider the following 410-residue polypeptide: 3-phosphoshikimate 1-carboxyvinyltransferase (410 aa).

3-phosphoshikimate contacts are provided by Lys-20, Ser-21, and Arg-25. Lys-20 serves as a coordination point for phosphoenolpyruvate. Arg-115 is a phosphoenolpyruvate binding site. 6 residues coordinate 3-phosphoshikimate: Ser-157, Ser-158, Gln-159, Ser-183, Asp-293, and Lys-320. Gln-159 contacts phosphoenolpyruvate. The active-site Proton acceptor is the Asp-293. Phosphoenolpyruvate-binding residues include Arg-324, Arg-365, and Lys-391.

Belongs to the EPSP synthase family. In terms of assembly, monomer.

The protein localises to the cytoplasm. The enzyme catalyses 3-phosphoshikimate + phosphoenolpyruvate = 5-O-(1-carboxyvinyl)-3-phosphoshikimate + phosphate. It participates in metabolic intermediate biosynthesis; chorismate biosynthesis. Its function is as follows. Catalyzes the transfer of the enolpyruvyl moiety of phosphoenolpyruvate (PEP) to the 5-hydroxyl of shikimate-3-phosphate (S3P) to produce enolpyruvyl shikimate-3-phosphate and inorganic phosphate. In Thermoplasma acidophilum (strain ATCC 25905 / DSM 1728 / JCM 9062 / NBRC 15155 / AMRC-C165), this protein is 3-phosphoshikimate 1-carboxyvinyltransferase.